The sequence spans 375 residues: Anhydro-N-acetylmuramic acid kinase (375 aa).

12-19 provides a ligand contact to ATP; it reads GTSLDGVD.

It belongs to the anhydro-N-acetylmuramic acid kinase family.

The enzyme catalyses 1,6-anhydro-N-acetyl-beta-muramate + ATP + H2O = N-acetyl-D-muramate 6-phosphate + ADP + H(+). The protein operates within amino-sugar metabolism; 1,6-anhydro-N-acetylmuramate degradation. It participates in cell wall biogenesis; peptidoglycan recycling. In terms of biological role, catalyzes the specific phosphorylation of 1,6-anhydro-N-acetylmuramic acid (anhMurNAc) with the simultaneous cleavage of the 1,6-anhydro ring, generating MurNAc-6-P. Is required for the utilization of anhMurNAc either imported from the medium or derived from its own cell wall murein, and thus plays a role in cell wall recycling. The protein is Anhydro-N-acetylmuramic acid kinase of Variovorax paradoxus (strain S110).